We begin with the raw amino-acid sequence, 565 residues long: O-fucosyltransferase 7 (565 aa).

The helical; Signal-anchor for type II membrane protein transmembrane segment at 17–37 threads the bilayer; the sequence is VLIWAICVMTLLCFLTVHIYV. N-linked (GlcNAc...) asparagine glycosylation is found at Asn62, Asn73, Asn104, Asn124, and Asn190. Residue 327 to 329 participates in substrate binding; that stretch reads HLR. A glycan (N-linked (GlcNAc...) asparagine) is linked at Asn441. The disordered stretch occupies residues 515-565; sequence NEIHKTRQGSPRRRKGPASGTKGLERHRSEESFYENPLPDCLCQRDPSKAR. Over residues 520–530 the composition is skewed to basic residues; sequence TRQGSPRRRKG.

The protein belongs to the glycosyltransferase GT106 family.

It is found in the membrane. Its pathway is glycan metabolism. The protein is O-fucosyltransferase 7 of Arabidopsis thaliana (Mouse-ear cress).